Reading from the N-terminus, the 125-residue chain is Small ribosomal subunit protein uS12 (125 aa).

The interval 1–24 (MPTISQLVRKPRKAKRTKSKVPAL) is disordered. The segment covering 9-19 (RKPRKAKRTKS) has biased composition (basic residues). Residue Asp89 is modified to 3-methylthioaspartic acid. The tract at residues 101 to 125 (SLDTAGVKDRKQARSKYGSKRPKSA) is disordered. A compositionally biased stretch (basic residues) spans 113–125 (ARSKYGSKRPKSA).

It belongs to the universal ribosomal protein uS12 family. In terms of assembly, part of the 30S ribosomal subunit. Contacts proteins S8 and S17. May interact with IF1 in the 30S initiation complex.

In terms of biological role, with S4 and S5 plays an important role in translational accuracy. Functionally, interacts with and stabilizes bases of the 16S rRNA that are involved in tRNA selection in the A site and with the mRNA backbone. Located at the interface of the 30S and 50S subunits, it traverses the body of the 30S subunit contacting proteins on the other side and probably holding the rRNA structure together. The combined cluster of proteins S8, S12 and S17 appears to hold together the shoulder and platform of the 30S subunit. The sequence is that of Small ribosomal subunit protein uS12 from Nitrosomonas europaea (strain ATCC 19718 / CIP 103999 / KCTC 2705 / NBRC 14298).